Here is a 446-residue protein sequence, read N- to C-terminus: Tubulin alpha chain-like 3 (446 aa).

Positions 1–4 (MREC) match the MREC motif motif. GTP-binding residues include Gln-11, Glu-78, Ser-147, Gly-151, Thr-152, Thr-186, Asn-213, and Asn-235. Glu-78 is a binding site for Mg(2+). Glu-261 is an active-site residue.

Belongs to the tubulin family. Dimer of alpha and beta chains. A typical microtubule is a hollow water-filled tube with an outer diameter of 25 nm and an inner diameter of 15 nM. Alpha-beta heterodimers associate head-to-tail to form protofilaments running lengthwise along the microtubule wall with the beta-tubulin subunit facing the microtubule plus end conferring a structural polarity. Microtubules usually have 13 protofilaments but different protofilament numbers can be found in some organisms and specialized cells. Mg(2+) serves as cofactor. In terms of processing, some glutamate residues at the C-terminus are polyglutamylated, resulting in polyglutamate chains on the gamma-carboxyl group. Polyglutamylation plays a key role in microtubule severing by spastin (SPAST). SPAST preferentially recognizes and acts on microtubules decorated with short polyglutamate tails: severing activity by SPAST increases as the number of glutamates per tubulin rises from one to eight, but decreases beyond this glutamylation threshold. Glutamylation is also involved in cilia motility. Post-translationally, some glutamate residues at the C-terminus are monoglycylated but not polyglycylated due to the absence of functional TTLL10 in human. Monoglycylation is mainly limited to tubulin incorporated into cilia and flagella axonemes, which is required for their stability and maintenance. Flagella glycylation controls sperm motility. Both polyglutamylation and monoglycylation can coexist on the same protein on adjacent residues, and lowering glycylation levels increases polyglutamylation, and reciprocally.

The protein localises to the cytoplasm. Its subcellular location is the cytoskeleton. The enzyme catalyses GTP + H2O = GDP + phosphate + H(+). Functionally, tubulin is the major constituent of microtubules, a cylinder consisting of laterally associated linear protofilaments composed of alpha- and beta-tubulin heterodimers. Microtubules grow by the addition of GTP-tubulin dimers to the microtubule end, where a stabilizing cap forms. Below the cap, tubulin dimers are in GDP-bound state, owing to GTPase activity of alpha-tubulin. This Homo sapiens (Human) protein is Tubulin alpha chain-like 3 (TUBAL3).